Here is a 386-residue protein sequence, read N- to C-terminus: Homoserine O-succinyltransferase (386 aa).

One can recognise an AB hydrolase-1 domain in the interval 49 to 358; that stretch reads NAILICHALS…DAEQGHDSFL (310 aa). S156 (nucleophile) is an active-site residue. R226 contributes to the substrate binding site. Residues D321 and H354 contribute to the active site. D355 provides a ligand contact to substrate.

The protein belongs to the AB hydrolase superfamily. MetX family. In terms of assembly, homodimer.

It localises to the cytoplasm. It carries out the reaction L-homoserine + succinyl-CoA = O-succinyl-L-homoserine + CoA. It participates in amino-acid biosynthesis; L-methionine biosynthesis via de novo pathway; O-succinyl-L-homoserine from L-homoserine: step 1/1. In terms of biological role, transfers a succinyl group from succinyl-CoA to L-homoserine, forming succinyl-L-homoserine. In Acinetobacter baumannii (strain AB307-0294), this protein is Homoserine O-succinyltransferase.